The following is a 518-amino-acid chain: Bifunctional enzyme NanE/NanK (518 aa).

The manNAc-6-P epimerase stretch occupies residues 1–234 (MCRVQGMIEE…DAVESAAKPS (234 aa)). The tract at residues 235 to 518 (SPVLAFDIGG…VADLAATYFS (284 aa)) is manNAc kinase. Residues 239 to 246 (AFDIGGTK) and 365 to 372 (GIGGGIVL) each bind ATP.

It in the N-terminal section; belongs to the NanE family. In the C-terminal section; belongs to the ROK (NagC/XylR) family. NanK subfamily.

The catalysed reaction is an N-acyl-D-glucosamine 6-phosphate = an N-acyl-D-mannosamine 6-phosphate. It carries out the reaction an N-acyl-D-mannosamine + ATP = an N-acyl-D-mannosamine 6-phosphate + ADP + H(+). The protein operates within amino-sugar metabolism; N-acetylneuraminate degradation; D-fructose 6-phosphate from N-acetylneuraminate: step 2/5. It participates in amino-sugar metabolism; N-acetylneuraminate degradation; D-fructose 6-phosphate from N-acetylneuraminate: step 3/5. Converts N-acetylmannosamine-6-phosphate (ManNAc-6-P) to N-acetylglucosamine-6-phosphate (GlcNAc-6-P). In terms of biological role, catalyzes the phosphorylation of N-acetylmannosamine (ManNAc) to ManNAc-6-P. The protein is Bifunctional enzyme NanE/NanK (nanEK) of Brucella melitensis biotype 1 (strain ATCC 23456 / CCUG 17765 / NCTC 10094 / 16M).